The chain runs to 140 residues: Histone H3-like centromeric protein A (140 aa).

The interval 1-46 (MGPRRRSRKPEAPRRRSPSPTPTPGPSRRGPSLGASSHQHSRRRQG) is disordered. Gly-2 is subject to N,N,N-trimethylglycine. Phosphoserine; by AURKA and AURKB is present on Ser-7. A phosphoserine mark is found at Ser-17, Ser-19, and Ser-27. The segment covering 26–37 (PSRRGPSLGASS) has biased composition (low complexity). The tract at residues 39–54 (QHSRRRQGWLKEIRKL) is important for flexibility of DNA ends that protrude from nucleosomes. Position 68 is a phosphoserine (Ser-68). Residues 75-116 (CVKFTRGVDFNWQAQALLALQEAAEAFLVHLFEDAYLLTLHA) are CATD.

It belongs to the histone H3 family. Component of centromeric nucleosomes, where DNA is wrapped around a histone octamer core. The octamer contains two molecules each of H2A, H2B, CENPA and H4 assembled in one CENPA-H4 heterotetramer and two H2A-H2B heterodimers. CENPA modulates the DNA-binding characteristics of nucleosomes so that protruding DNA ends have higher flexibility than in nucleosomes containing conventional histone H3. Inhibits binding of histone H1 to nucleosomes, since histone H1 binds preferentially to rigid DNA linkers that protrude from nucleosomes. Nucleosomes containing CENPA also contain histone H2A variants such as MACROH2A and H2A.Z/H2AZ1. The CENPA-H4 heterotetramer is more compact and structurally more rigid than corresponding H3-H4 heterotetramers. Can assemble into nucleosomes that contain both CENPA and histone H3.3; these nucleosomes interact with a single CENPC chain. Heterotrimer composed of HJURP, CENPA and histone H4, where HJURP interacts with the dimer formed by CENPA and histone H4 and prevents tetramerization of CENPA and H4. Component of the CENPA-NAC complex, at least composed of CENPA, CENPC, CENPH, CENPM, CENPN, CENPT and CENPU. Interacts (via CATD domain) with HJURP; the interaction is direct and is required for its localization to centromeres. Interacts with CENPC, CENPN and CENPT; interaction is direct. Part of a centromere complex consisting of CENPA, CENPT and CENPW. Identified in centromere complexes containing histones H2A, H2B and H4, and at least CENPA, CENPB, CENPC, CENPT, CENPN, HJURP, SUPT16H, SSRP1 and RSF1. Can self-associate. The CENPA-H4 heterotetramer can bind DNA by itself (in vitro). Interacts with CDK1, PPP1CA and RBBP7. In terms of assembly, (Microbial infection) Interacts directly with herpes virus HHV-1 protein ICP0. Post-translationally, ubiquitinated. Interaction with herpes virus HSV-1 ICP0 protein, leads to its degradation by the proteasome pathway. In terms of processing, trimethylated by NTMT1 at the N-terminal glycine after cleavage of Met-1. Methylation is low before incorporation into nucleosomes and increases with cell cycle progression, with the highest levels in mitotic nucleosomes. Phosphorylated by CDK1 at Ser-68 during early mitosis; this abolishes association with chromatin and centromeres, prevents interaction with HJURP and thereby prevents premature assembly of CENPA into centromeres. Dephosphorylated at Ser-68 by PPP1CA during late mitosis. Phosphorylation of Ser-7 by AURKA and AURKB during prophase is required for localization of AURKA and AURKB at inner centromere and is essential for normal cytokinesis. Initial phosphorylation during prophase is mediated by AURKA and is maintained by AURKB. Post-translationally, poly-ADP-ribosylated by PARP1.

The protein resides in the nucleus. It is found in the chromosome. It localises to the centromere. In terms of biological role, histone H3-like nucleosomal protein that is specifically found in centromeric nucleosomes. Replaces conventional H3 in the nucleosome core of centromeric chromatin that serves as an assembly site for the inner kinetochore. The presence of CENPA subtly modifies the nucleosome structure and the way DNA is wrapped around the nucleosome and gives rise to protruding DNA ends that are less well-ordered and rigid compared to nucleosomes containing histone H3. May serve as an epigenetic mark that propagates centromere identity through replication and cell division. Required for recruitment and assembly of kinetochore proteins, and as a consequence required for progress through mitosis, chromosome segregation and cytokinesis. The chain is Histone H3-like centromeric protein A (CENPA) from Homo sapiens (Human).